The sequence spans 327 residues: MAKSPVRIAVTGAAGQIAYALVFRIASGALLGPDQPVILHLLDLPQMQGALGGVMMELEDCAFPLLAGMVATDDPKVAFKDIDIGFLVGARPRGKGMERKDLLGANAEIFTVQGRALNEVAKRSARVLVVGNPANTNAYIAMKSAPDLSPDCFSAMIRLDHNRAASMLAAKAGVNVGDVGKLIVWGNHSPTMYPDYRFAEAGGRKLAEAINDEAWNRDVFIPTVGKRGAAVIEARGASSAASAANAAIDQVRDWVVGSDGRWVSMAIPSDGSYGIPEGIMFGVPVTTQGGVVTRVPNLAIDAFAQSRLDITLNELKEEREAIAHLLA.

12 to 18 (GAAGQIA) lines the NAD(+) pocket. 2 residues coordinate substrate: Arg-93 and Arg-99. NAD(+) contacts are provided by residues Asn-106, Gln-113, and 130–132 (VGN). Substrate-binding residues include Asn-132 and Arg-163. Catalysis depends on His-188, which acts as the Proton acceptor.

This sequence belongs to the LDH/MDH superfamily. MDH type 2 family.

It carries out the reaction (S)-malate + NAD(+) = oxaloacetate + NADH + H(+). In terms of biological role, catalyzes the reversible oxidation of malate to oxaloacetate. The protein is Malate dehydrogenase of Acidiphilium cryptum (strain JF-5).